Here is a 74-residue protein sequence, read N- to C-terminus: Conotoxin SIIID (74 aa).

The first 20 residues, 1–20 (MMSKLGVLLTVCLLLFPLTA), serve as a signal peptide directing secretion. Residues 21 to 53 (LPLDGDQPADQLEDRMQDDISSEQYPSFVRRQK) constitute a propeptide that is removed on maturation. Intrachain disulfides connect C54/C71, C55/C73, and C61/C74.

The protein belongs to the conotoxin M superfamily. Post-translationally, three disulfide isomers have been synthesized and tested. SIIID with the disulfide pairing 1-4;2-5;3-6 is the most active. As to expression, expressed by the venom duct.

It is found in the secreted. The short synthetic peptide SIIID (range 54-74, with disulfide pairing 1-4, 2-5 and 3-6) reversibly inhibits human alpha-7/CHRNA7 acetylcholine receptor (IC(50)=880 nM). Shows a paralytic effect in fish. The sequence is that of Conotoxin SIIID from Conus striatus (Striated cone).